A 363-amino-acid chain; its full sequence is GTPase Obg (363 aa).

Residues methionine 1–isoleucine 159 enclose the Obg domain. Residues alanine 160–valine 327 enclose the OBG-type G domain. GTP contacts are provided by residues glycine 166–serine 173, phenylalanine 191–histidine 195, aspartate 212–glycine 215, serine 279–aspartate 282, and serine 308–valine 310. Serine 173 and threonine 193 together coordinate Mg(2+). Positions glutamate 332–proline 363 are disordered. Residues asparagine 353–proline 363 are compositionally biased toward acidic residues.

The protein belongs to the TRAFAC class OBG-HflX-like GTPase superfamily. OBG GTPase family. In terms of assembly, monomer. Mg(2+) serves as cofactor.

The protein resides in the cytoplasm. Its function is as follows. An essential GTPase which binds GTP, GDP and possibly (p)ppGpp with moderate affinity, with high nucleotide exchange rates and a fairly low GTP hydrolysis rate. Plays a role in control of the cell cycle, stress response, ribosome biogenesis and in those bacteria that undergo differentiation, in morphogenesis control. The sequence is that of GTPase Obg from Rhizobium etli (strain ATCC 51251 / DSM 11541 / JCM 21823 / NBRC 15573 / CFN 42).